We begin with the raw amino-acid sequence, 27 residues long: AITAGALQPGRLSVHREPWGFSREQAV.

The segment at 15-21 (HREPWGF) is important for interaction with SLC2A1 and SLC2A3.

In terms of assembly, interacts with glucose transporters SLC2A1/GLUT1 and SLC2A3/GLUT3; the interactions may promote SLC2A1- and SLC2A3-mediated glucose transport to meet the energy needs of mesendoderm differentiation.

The protein localises to the cell membrane. Required for mesendoderm differentiation. Interacts with glucose transporters and promotes glucose uptake. Probably augments the glucose uptake capacity of glucose transporter proteins to meet the energy needs of mesendoderm differentiation. This chain is Small integral membrane protein 43, found in Pongo abelii (Sumatran orangutan).